We begin with the raw amino-acid sequence, 440 residues long: tRNA modification GTPase MnmE (440 aa).

(6S)-5-formyl-5,6,7,8-tetrahydrofolate is bound by residues R22, E79, and K118. The 153-residue stretch at 214 to 366 folds into the TrmE-type G domain; sequence GLIFTILGKP…LKTMLEAEAR (153 aa). GTP is bound by residues 224–229, 243–249, and 268–271; these read NAGKSS, SSQPGTT, and DTAG. Mg(2+)-binding residues include S228 and T249. K440 is a (6S)-5-formyl-5,6,7,8-tetrahydrofolate binding site.

It belongs to the TRAFAC class TrmE-Era-EngA-EngB-Septin-like GTPase superfamily. TrmE GTPase family. As to quaternary structure, homodimer. Heterotetramer of two MnmE and two MnmG subunits. The cofactor is K(+).

Its subcellular location is the cytoplasm. In terms of biological role, exhibits a very high intrinsic GTPase hydrolysis rate. Involved in the addition of a carboxymethylaminomethyl (cmnm) group at the wobble position (U34) of certain tRNAs, forming tRNA-cmnm(5)s(2)U34. The sequence is that of tRNA modification GTPase MnmE from Granulibacter bethesdensis (strain ATCC BAA-1260 / CGDNIH1).